Reading from the N-terminus, the 839-residue chain is LPS-assembly protein LptD (839 aa).

An N-terminal signal peptide occupies residues 1–21 (MAIGITACVLSLINYQGLAYS).

Belongs to the LptD family. In terms of assembly, component of the lipopolysaccharide transport and assembly complex. Interacts with LptE and LptA.

Its subcellular location is the cell outer membrane. In terms of biological role, together with LptE, is involved in the assembly of lipopolysaccharide (LPS) at the surface of the outer membrane. This Legionella pneumophila (strain Paris) protein is LPS-assembly protein LptD.